A 172-amino-acid polypeptide reads, in one-letter code: Large ribosomal subunit protein uL10 (172 aa).

It belongs to the universal ribosomal protein uL10 family. In terms of assembly, part of the ribosomal stalk of the 50S ribosomal subunit. The N-terminus interacts with L11 and the large rRNA to form the base of the stalk. The C-terminus forms an elongated spine to which L12 dimers bind in a sequential fashion forming a multimeric L10(L12)X complex.

Its function is as follows. Forms part of the ribosomal stalk, playing a central role in the interaction of the ribosome with GTP-bound translation factors. This Bartonella tribocorum (strain CIP 105476 / IBS 506) protein is Large ribosomal subunit protein uL10.